A 95-amino-acid chain; its full sequence is Aspartyl/glutamyl-tRNA(Asn/Gln) amidotransferase subunit C (95 aa).

Belongs to the GatC family. Heterotrimer of A, B and C subunits.

The enzyme catalyses L-glutamyl-tRNA(Gln) + L-glutamine + ATP + H2O = L-glutaminyl-tRNA(Gln) + L-glutamate + ADP + phosphate + H(+). The catalysed reaction is L-aspartyl-tRNA(Asn) + L-glutamine + ATP + H2O = L-asparaginyl-tRNA(Asn) + L-glutamate + ADP + phosphate + 2 H(+). Functionally, allows the formation of correctly charged Asn-tRNA(Asn) or Gln-tRNA(Gln) through the transamidation of misacylated Asp-tRNA(Asn) or Glu-tRNA(Gln) in organisms which lack either or both of asparaginyl-tRNA or glutaminyl-tRNA synthetases. The reaction takes place in the presence of glutamine and ATP through an activated phospho-Asp-tRNA(Asn) or phospho-Glu-tRNA(Gln). The polypeptide is Aspartyl/glutamyl-tRNA(Asn/Gln) amidotransferase subunit C (Syntrophotalea carbinolica (strain DSM 2380 / NBRC 103641 / GraBd1) (Pelobacter carbinolicus)).